A 227-amino-acid polypeptide reads, in one-letter code: MGQKVNPNGFRFGITRNHNAIWYADKNKFSINLLEDVKIHRFFEKLTREYQIGNTVIRRDRNNAITVLVYTAKLGSFLGASGENLKKIVEKLRKTLKNRKIVINVDAVDIQSPELNAKLMAELIAEKLEQRKSYRIAQKFAIRTALKNGATGVKTIVCGRLNGVEMARCEGYAEGEMKLHTLRQNVEYATAIAKTTYGILGVKVWVSLGEIKEKTDIDAIIRADKRR.

One can recognise a KH type-2 domain in the interval 39–109; that stretch reads IHRFFEKLTR…KIVINVDAVD (71 aa).

It belongs to the universal ribosomal protein uS3 family. In terms of assembly, part of the 30S ribosomal subunit. Forms a tight complex with proteins S10 and S14.

Its function is as follows. Binds the lower part of the 30S subunit head. Binds mRNA in the 70S ribosome, positioning it for translation. This Mesomycoplasma hyopneumoniae (strain 232) (Mycoplasma hyopneumoniae) protein is Small ribosomal subunit protein uS3.